The following is a 213-amino-acid chain: Charged multivesicular body protein 2b (213 aa).

A2 is modified (N-acetylalanine). A coiled-coil region spans residues 25–55 (QRAIIRDRAALEKQEKQLELEIKKMAKIGNK). Over residues 179 to 194 (AKAPSAARSLPSASTS) the composition is skewed to low complexity. The disordered stretch occupies residues 179 to 199 (AKAPSAARSLPSASTSKATIS). A Phosphoserine modification is found at S199. The MIT-interacting motif motif lies at 201–211 (EEIERQLKALG).

The protein belongs to the SNF7 family. As to quaternary structure, probable core component of the endosomal sorting required for transport complex III (ESCRT-III). ESCRT-III components are thought to multimerize to form a flat lattice on the perimeter membrane of the endosome. Several assembly forms of ESCRT-III may exist that interact and act sequentially. Interacts with CHMP2A. Interacts with VPS4A. Interacts with VPS4B; the interaction is direct. In brain, it is expressed in all neuronal populations with a relatively enhanced expression in the hippocampus, frontal and temporal lobes and in both granule and Purkinje cells of the cerebellum. Not expressed in astrocytes or oligodendrocytes.

The protein resides in the cytoplasm. It is found in the cytosol. The protein localises to the late endosome membrane. Functionally, probable core component of the endosomal sorting required for transport complex III (ESCRT-III) which is involved in multivesicular bodies (MVBs) formation and sorting of endosomal cargo proteins into MVBs. MVBs contain intraluminal vesicles (ILVs) that are generated by invagination and scission from the limiting membrane of the endosome and mostly are delivered to lysosomes enabling degradation of membrane proteins, such as stimulated growth factor receptors, lysosomal enzymes and lipids. The MVB pathway appears to require the sequential function of ESCRT-O, -I,-II and -III complexes. ESCRT-III proteins mostly dissociate from the invaginating membrane before the ILV is released. The ESCRT machinery also functions in topologically equivalent membrane fission events, such as the terminal stages of cytokinesis. ESCRT-III proteins are believed to mediate the necessary vesicle extrusion and/or membrane fission activities, possibly in conjunction with the AAA ATPase VPS4. The protein is Charged multivesicular body protein 2b (Chmp2b) of Mus musculus (Mouse).